Here is a 740-residue protein sequence, read N- to C-terminus: Phosphoribosylformylglycinamidine synthase subunit PurL (740 aa).

His55 is a catalytic residue. ATP-binding residues include Tyr58 and Lys97. A Mg(2+)-binding site is contributed by Glu99. Substrate contacts are provided by residues 100–103 (SHNH) and Arg122. The active-site Proton acceptor is His101. Asp123 lines the Mg(2+) pocket. Gln246 lines the substrate pocket. Asp276 provides a ligand contact to Mg(2+). 320 to 322 (ESQ) is a substrate binding site. 2 residues coordinate ATP: Asp501 and Gly538. Asn539 contributes to the Mg(2+) binding site. Ser541 is a binding site for substrate.

Belongs to the FGAMS family. Monomer. Part of the FGAM synthase complex composed of 1 PurL, 1 PurQ and 2 PurS subunits.

Its subcellular location is the cytoplasm. The catalysed reaction is N(2)-formyl-N(1)-(5-phospho-beta-D-ribosyl)glycinamide + L-glutamine + ATP + H2O = 2-formamido-N(1)-(5-O-phospho-beta-D-ribosyl)acetamidine + L-glutamate + ADP + phosphate + H(+). It participates in purine metabolism; IMP biosynthesis via de novo pathway; 5-amino-1-(5-phospho-D-ribosyl)imidazole from N(2)-formyl-N(1)-(5-phospho-D-ribosyl)glycinamide: step 1/2. Its function is as follows. Part of the phosphoribosylformylglycinamidine synthase complex involved in the purines biosynthetic pathway. Catalyzes the ATP-dependent conversion of formylglycinamide ribonucleotide (FGAR) and glutamine to yield formylglycinamidine ribonucleotide (FGAM) and glutamate. The FGAM synthase complex is composed of three subunits. PurQ produces an ammonia molecule by converting glutamine to glutamate. PurL transfers the ammonia molecule to FGAR to form FGAM in an ATP-dependent manner. PurS interacts with PurQ and PurL and is thought to assist in the transfer of the ammonia molecule from PurQ to PurL. This Lacticaseibacillus casei (Lactobacillus casei) protein is Phosphoribosylformylglycinamidine synthase subunit PurL.